We begin with the raw amino-acid sequence, 362 residues long: 3-isopropylmalate dehydrogenase (362 aa).

78-91 contributes to the NAD(+) binding site; the sequence is GYKWDSLPPHQRPE. Residues Arg98, Arg108, Arg136, and Asp226 each coordinate substrate. The Mg(2+) site is built by Asp226, Asp250, and Asp254. 284–296 contributes to the NAD(+) binding site; sequence GSAPDIAGLDKAN.

It belongs to the isocitrate and isopropylmalate dehydrogenases family. LeuB type 1 subfamily. As to quaternary structure, homodimer. It depends on Mg(2+) as a cofactor. Mn(2+) is required as a cofactor.

It localises to the cytoplasm. The enzyme catalyses (2R,3S)-3-isopropylmalate + NAD(+) = 4-methyl-2-oxopentanoate + CO2 + NADH. It functions in the pathway amino-acid biosynthesis; L-leucine biosynthesis; L-leucine from 3-methyl-2-oxobutanoate: step 3/4. In terms of biological role, catalyzes the oxidation of 3-carboxy-2-hydroxy-4-methylpentanoate (3-isopropylmalate) to 3-carboxy-4-methyl-2-oxopentanoate. The product decarboxylates to 4-methyl-2 oxopentanoate. The polypeptide is 3-isopropylmalate dehydrogenase (Trichormus variabilis (strain ATCC 29413 / PCC 7937) (Anabaena variabilis)).